The primary structure comprises 232 residues: tRNA (guanine-N(1)-)-methyltransferase (232 aa).

S-adenosyl-L-methionine is bound by residues Gly-112 and 132–137; that span reads IGDYVL.

Belongs to the RNA methyltransferase TrmD family. As to quaternary structure, homodimer.

It localises to the cytoplasm. It carries out the reaction guanosine(37) in tRNA + S-adenosyl-L-methionine = N(1)-methylguanosine(37) in tRNA + S-adenosyl-L-homocysteine + H(+). Functionally, specifically methylates guanosine-37 in various tRNAs. This Anaplasma phagocytophilum (strain HZ) protein is tRNA (guanine-N(1)-)-methyltransferase.